We begin with the raw amino-acid sequence, 277 residues long: GATA transcription factor 15 (277 aa).

Positions 52-94 (AYDDHSTVTTSPSSPSSSSTGSVDCTLSLGTPSSRRAEPVAAA) are disordered. Low complexity predominate over residues 58–74 (TVTTSPSSPSSSSTGSV). The GATA-type zinc finger occupies 154–179 (CANCGTASTPLWRNGPRGPKSLCNAC).

The protein belongs to the type IV zinc-finger family. Class B subfamily.

In terms of biological role, probable transcription factor that regulates organogenesis during transition from the vegetative to the reproductive phase. Regulates the expression of CYP78A11/PLA1, HD3A and MADS1 during reproductive development in rice. May act upstream of CYP78A11/PLA1 during panicle development. Acts independently of the photoperiodic and gibberellin signaling pathways. The chain is GATA transcription factor 15 from Oryza sativa subsp. indica (Rice).